Here is a 160-residue protein sequence, read N- to C-terminus: Nucleotide-binding protein CJA_2652 (160 aa).

The protein belongs to the YajQ family.

Nucleotide-binding protein. The chain is Nucleotide-binding protein CJA_2652 from Cellvibrio japonicus (strain Ueda107) (Pseudomonas fluorescens subsp. cellulosa).